Here is a 273-residue protein sequence, read N- to C-terminus: 4-diphosphocytidyl-2-C-methyl-D-erythritol kinase (273 aa).

Residue lysine 9 is part of the active site. Residue 90–100 participates in ATP binding; the sequence is PVAAGLGGGSA. Aspartate 129 is a catalytic residue.

It belongs to the GHMP kinase family. IspE subfamily.

It catalyses the reaction 4-CDP-2-C-methyl-D-erythritol + ATP = 4-CDP-2-C-methyl-D-erythritol 2-phosphate + ADP + H(+). The protein operates within isoprenoid biosynthesis; isopentenyl diphosphate biosynthesis via DXP pathway; isopentenyl diphosphate from 1-deoxy-D-xylulose 5-phosphate: step 3/6. Its function is as follows. Catalyzes the phosphorylation of the position 2 hydroxy group of 4-diphosphocytidyl-2C-methyl-D-erythritol. This is 4-diphosphocytidyl-2-C-methyl-D-erythritol kinase from Erythrobacter litoralis (strain HTCC2594).